The primary structure comprises 390 residues: Elongation factor Tu 1 (390 aa).

The tr-type G domain maps to 10–201; that stretch reads KPHVNVGTIG…LDEYVAVPPR (192 aa). Positions 19 to 26 are G1; that stretch reads GHVDHGKT. 19–26 contributes to the GTP binding site; the sequence is GHVDHGKT. Threonine 26 contributes to the Mg(2+) binding site. The tract at residues 55–59 is G2; the sequence is GITIA. The interval 76-79 is G3; sequence DCPG. GTP is bound by residues 76 to 80 and 131 to 134; these read DCPGH and NKAD. The tract at residues 131–134 is G4; that stretch reads NKAD. The tract at residues 168 to 170 is G5; the sequence is SAL.

This sequence belongs to the TRAFAC class translation factor GTPase superfamily. Classic translation factor GTPase family. EF-Tu/EF-1A subfamily. In terms of assembly, monomer.

It is found in the cytoplasm. It catalyses the reaction GTP + H2O = GDP + phosphate + H(+). Functionally, GTP hydrolase that promotes the GTP-dependent binding of aminoacyl-tRNA to the A-site of ribosomes during protein biosynthesis. The chain is Elongation factor Tu 1 from Wolbachia pipientis wMel.